The chain runs to 461 residues: Glycolipid 2-alpha-mannosyltransferase 2 (461 aa).

The Cytoplasmic segment spans residues 1–12 (MKPSIFYSSRQP). A helical; Signal-anchor for type II membrane protein transmembrane segment spans residues 13–35 (YLKYLAIILTTITIYVLTHSSYS). A compositionally biased stretch (polar residues) spans 35 to 52 (SADPNINDVTTKPISETV). The tract at residues 35 to 138 (SADPNINDVT…SSSKDPVKPE (104 aa)) is disordered. Residues 36-461 (ADPNINDVTT…QKPKEWEKYQ (426 aa)) are Lumenal-facing. Low complexity-rich tracts occupy residues 61–70 (SSPEQQQQQP) and 106–116 (PKSSSSSPQQQ). Basic and acidic residues predominate over residues 117–126 (EKQDTKKESE). The active-site Nucleophile is E349.

The protein belongs to the glycosyltransferase 15 family.

The protein localises to the golgi apparatus membrane. Involved in O-glycosylation of cell wall and secreted proteins. Transfers an alpha-D-mannosyl residue from GDP-mannose into lipid-linked oligosaccharide, forming an alpha-(1-&gt;2)-D-mannosyl-D-mannose linkage. Mainly responsible for the addition of the third mannose residue in an O-linked mannose pentamer. Can also substitute for MNT1 by adding the second mannose residue. Important for adherence to host surfaces and for virulence. The polypeptide is Glycolipid 2-alpha-mannosyltransferase 2 (MNT2) (Candida albicans (strain SC5314 / ATCC MYA-2876) (Yeast)).